Here is a 296-residue protein sequence, read N- to C-terminus: MTTTLASRPDGEGSVQVKLDPKVNIEEGALVIAVYGKGGIGKSTTSSNLSAAFSKLGKKVLQIGCDPKHDSTFTLTHKMVPTVIDILEEVDFHSEELRPEDFMFKGFNGVQCVESGGPPAGTGCGGYVTGQTVKLLKEHHLLEDTDVVIFDVLGDVVCGGFAAPLQHANYCLIVTANDFDSIFAMNRIVAAINAKAKNYKVRLGGVIANRSADLDQIEKFNERTGLKTMAHFRNVDAIRRSRLKKCTIFEMDPEEEGVKEVQNEYLSLAKKMIDNVEPLEVEPLKDREIFDLLGFD.

Residues 39–44 and lysine 68 each bind ATP; that span reads GIGKST. Serine 43 is a Mg(2+) binding site. Cysteine 124 and cysteine 158 together coordinate [4Fe-4S] cluster. 209–210 is an ATP binding site; the sequence is NR.

It belongs to the NifH/BchL/ChlL family. Homodimer. Protochlorophyllide reductase is composed of three subunits; ChlL, ChlN and ChlB. Requires [4Fe-4S] cluster as cofactor.

The catalysed reaction is chlorophyllide a + oxidized 2[4Fe-4S]-[ferredoxin] + 2 ADP + 2 phosphate = protochlorophyllide a + reduced 2[4Fe-4S]-[ferredoxin] + 2 ATP + 2 H2O. The protein operates within porphyrin-containing compound metabolism; chlorophyll biosynthesis (light-independent). Functionally, component of the dark-operative protochlorophyllide reductase (DPOR) that uses Mg-ATP and reduced ferredoxin to reduce ring D of protochlorophyllide (Pchlide) to form chlorophyllide a (Chlide). This reaction is light-independent. The L component serves as a unique electron donor to the NB-component of the complex, and binds Mg-ATP. The polypeptide is Light-independent protochlorophyllide reductase iron-sulfur ATP-binding protein (Prochlorococcus marinus (strain MIT 9211)).